The following is a 1620-amino-acid chain: ABC-type organic anion transporter ABCA8A (1620 aa).

Transmembrane regions (helical) follow at residues 30-50 (TFLEFLYTALILLSLILFLQL), 224-244 (CFLFFCIIRFSPLTYYISAGV), 263-283 (SAFWLSWGLLYGVIVFVVTLL), 294-314 (VFLTGFMVIFSLFFFYGLSLI), 328-348 (FLTDLVVFLLTVSCGSLGFTA), 357-377 (LEWLLSLLSPFAFMLGMVQLL), and 397-417 (IGTIFMLFFDGVFYLLLTFYF). Residues Asn-454 and Asn-482 are each glycosylated (N-linked (GlcNAc...) asparagine). Residues 478-713 (IRIRNLTKDY…WGIGYHLSLQ (236 aa)) form the ABC transporter 1 domain. 514–521 (GHSGAGKS) contacts ATP. The helical transmembrane segment at 861–881 (IVILILVLGIGLLHILSANIY) threads the bilayer. An N-linked (GlcNAc...) asparagine glycan is attached at Asn-967. 7 helical membrane-spanning segments follow: residues 979–999 (CFPVLVDIVSNGLLGLFAPSA), 1019–1039 (YLAYFFLWVLLMACVPPYISM), 1068–1088 (ALFEVPVYCALILSIFIAFYA), 1105–1125 (ILYVGGYAMSVIFMTYVISFI), 1133–1153 (SGLWSLCFYIVSFFSMCFMLI), 1159–1179 (ISLFVLIALVPPATLGGCTLL), and 1196–1216 (EYSYLFFLAPLLHFAIFVVIL). Residues 1284–1517 (LRKEYKGKKK…FGKEYLLEMK (234 aa)) enclose the ABC transporter 2 domain. ATP is bound at residue 1322–1329 (GHNGAGKS).

The protein belongs to the ABC transporter superfamily. ABCA family. In terms of tissue distribution, expressed in lung, heart, liver, skeletal muscle and testis. Highly expressed in the liver, and is also abundant in heart and skeletal muscle. Highly expressed in heart.

Its subcellular location is the cell membrane. It localises to the basolateral cell membrane. The enzyme catalyses taurocholate(in) + ATP + H2O = taurocholate(out) + ADP + phosphate + H(+). The catalysed reaction is cholesterol(in) + ATP + H2O = cholesterol(out) + ADP + phosphate + H(+). Its activity is regulated as follows. Cholesterol efflux is increased by extracellularly applied taurocholate. Its function is as follows. Mediates cholesterol and taurocholate efflux. Through the interaction with ABCA1 potentiates the cholesterol efflux to lipid-free APOA1, in turn regulates high-density lipoprotein cholesterol levels. The polypeptide is ABC-type organic anion transporter ABCA8A (Mus musculus (Mouse)).